The sequence spans 120 residues: CLAVATA3/ESR (CLE)-related protein 9 (120 aa).

The first 26 residues, 1–26 (MTMTHLNRLILISLLFVSLLLKSSTA), serve as a signal peptide directing secretion. Residue Asn35 is glycosylated (N-linked (GlcNAc...) asparagine). A disordered region spans residues 85–120 (RSSRKQPLLSPPPPEIDPRYGVDKRLVPSGPNPLHN). Basic and acidic residues predominate over residues 100-110 (IDPRYGVDKRL). Residues Pro112 and Pro115 each carry the hydroxyproline modification. Pro115 is a glycosylation site (O-linked (Ara...) hydroxyproline).

It belongs to the CLV3/ESR signal peptide family. In terms of processing, the O-glycosylation (arabinosylation) of the hydroxyproline Pro-115 enhances binding affinity of the CLE9p peptide for its receptor. In terms of tissue distribution, mostly expressed in leaves, flowers, stems and apex, and, to a lower extent, in seedlings, roots, siliques and pollen.

Its subcellular location is the secreted. The protein localises to the extracellular space. Extracellular signal peptide that regulates cell fate. Represses root apical meristem maintenance. Regulates the transition of protophloem cells from proliferation to differentiation, thus impinging on postembryonic growth capacity of the root meristem; this signaling pathway requires CRN and CLV2. In Arabidopsis thaliana (Mouse-ear cress), this protein is CLAVATA3/ESR (CLE)-related protein 9.